The sequence spans 708 residues: Nicastrin (708 aa).

A signal peptide spans 1-27; the sequence is MATTRGGSGPDPGSRGLLLLSFSVVLA. The Lumenal segment spans residues 28-668; it reads GLCGGNSVER…IFLIASKELE (641 aa). Residues asparagine 44, asparagine 54, and asparagine 128 are each glycosylated (N-linked (GlcNAc...) asparagine). A disulfide bond links cysteine 49 and cysteine 61. The cysteines at positions 139 and 158 are disulfide-linked. 2 N-linked (GlcNAc...) asparagine glycosylation sites follow: asparagine 186 and asparagine 203. 2 disulfides stabilise this stretch: cysteine 194-cysteine 212 and cysteine 229-cysteine 247. N-linked (GlcNAc...) asparagine glycosylation is found at asparagine 263, asparagine 386, asparagine 434, asparagine 463, asparagine 505, asparagine 529, asparagine 561, asparagine 572, asparagine 579, asparagine 593, and asparagine 611. Cysteines 585 and 619 form a disulfide. Residues 669–689 form a helical membrane-spanning segment; it reads FITLIVGFSTLVFSLIVTYCI. Residues 690–708 lie on the Cytoplasmic side of the membrane; sequence NAKADVLFVAPREPGAVSY.

Belongs to the nicastrin family. As to quaternary structure, component of the gamma-secretase complex. The functional gamma-secretase complex is composed of at least four polypeptides: a presenilin homodimer (PSEN1 or PSEN2), nicastrin (NCSTN), APH1 (APH1A or APH1B) and PEN2. Binds to proteolytic processed C-terminal fragments C83 and C99 of the amyloid precursor protein (APP). Interacts with PSEN1 and PSEN2. In terms of processing, N-glycosylated.

The protein localises to the membrane. It is found in the cytoplasmic vesicle membrane. Its subcellular location is the melanosome. Functionally, essential subunit of the gamma-secretase complex, an endoprotease complex that catalyzes the intramembrane cleavage of integral membrane proteins such as Notch receptors and APP (amyloid-beta precursor protein). The gamma-secretase complex plays a role in Notch and Wnt signaling cascades and regulation of downstream processes via its role in processing key regulatory proteins, and by regulating cytosolic CTNNB1 levels. This chain is Nicastrin (Ncstn), found in Mus musculus (Mouse).